Consider the following 421-residue polypeptide: ATP-dependent RNA helicase RhlB (421 aa).

A Q motif motif is present at residues 9–37 (QKFSDFALHPKVVEALEKKGFHNCTPIQA). Positions 40–219 (LPLTLAGRDV…FEQMNNAEYI (180 aa)) constitute a Helicase ATP-binding domain. Residue 53-60 (AQTGTGKT) participates in ATP binding. The DEAD box signature appears at 165–168 (DEAD). A Helicase C-terminal domain is found at 245-390 (RLLQTLIEEE…VSKYNPDALM (146 aa)). Positions 392 to 421 (DLPKPLRLTRPRTGNGPRRTGAPRNRRRSG) are disordered. Low complexity predominate over residues 402–414 (PRTGNGPRRTGAP).

This sequence belongs to the DEAD box helicase family. RhlB subfamily. Component of the RNA degradosome, which is a multiprotein complex involved in RNA processing and mRNA degradation.

The protein resides in the cytoplasm. It carries out the reaction ATP + H2O = ADP + phosphate + H(+). Functionally, DEAD-box RNA helicase involved in RNA degradation. Has RNA-dependent ATPase activity and unwinds double-stranded RNA. The chain is ATP-dependent RNA helicase RhlB from Escherichia coli O139:H28 (strain E24377A / ETEC).